We begin with the raw amino-acid sequence, 155 residues long: Chromosomal passenger complex protein bir-1 (155 aa).

The BIR repeat unit spans residues 20-87 (RLMTFKNFEY…KRDEPCEFVR (68 aa)). C57, C60, H76, and C83 together coordinate Zn(2+).

It belongs to the IAP family. As to quaternary structure, component of the CPC complex which consists of icp-1; csc-1; bir-1 and air-2. Within the complex, interacts with csc-1, icp-1 and air-2. Interacts with csc-1 in a zinc-dependent-manner; the interaction is direct. Expressed in oocytes and sperm.

The protein resides in the chromosome. Its subcellular location is the cytoplasm. It localises to the cytoskeleton. It is found in the spindle. The protein localises to the midbody. Functionally, component of the chromosomal passenger complex (CPC), a complex that acts as a key regulator of chromosome segregation and cytokinesis. The CPC complex has essential functions at the centromere in ensuring correct chromosome condensation, alignment and segregation. In the complex, required to direct the Aurora B/air-2 kinase to chromosomes. Also functions in spindle midzone formation and in the formation of polar bodies during oogenesis. Required for the localization of the kinetochore component hcp-1 to chromosomes. Involved in the positive regulation of transcription. Involved in the transcriptional regulation of collagen genes. In Caenorhabditis elegans, this protein is Chromosomal passenger complex protein bir-1.